Here is a 278-residue protein sequence, read N- to C-terminus: Truncated FRIGIDA-like protein 1 (278 aa).

Positions 1-36 (MTASETIATAINQIDEKKEKLKKAFDDLQAHRSLLS) form a coiled coil.

Belongs to the Frigida family.

In terms of biological role, truncated inactive FRIGIDA-like 1 protein. In Arabidopsis thaliana (Mouse-ear cress), this protein is Truncated FRIGIDA-like protein 1 (FRL1).